The chain runs to 1021 residues: Collagen alpha-1(I) chain (1021 aa).

Residues 1–1021 (DEKSAGGISV…PGPPGPPGPP (1021 aa)) form a disordered region. Lys-3 carries the allysine modification. At Ser-4 the chain carries Phosphoserine. 4-hydroxyproline is present on residues Pro-23, Pro-26, Pro-29, Pro-38, Pro-41, Pro-44, Pro-59, Pro-74, Pro-80, Pro-89, and Pro-95. Low complexity predominate over residues 31–50 (PQGFQGPPGEPGEPGASGPM). A compositionally biased stretch (basic and acidic residues) spans 62 to 76 (NGDDGEAGKPGRPGE). Lys-98 carries the post-translational modification 5-hydroxylysine; alternate. Lys-98 carries O-linked (Gal...) hydroxylysine; alternate glycosylation. Ser-104 carries the phosphoserine modification. The span at 112-128 (DAGPAGPKGEPGSPGEN) shows a compositional bias: low complexity. 4-hydroxyproline is present on residues Pro-122, Pro-125, Pro-131, Pro-140, Pro-146, Pro-167, Pro-176, Pro-179, Pro-206, Pro-209, Pro-221, Pro-227, Pro-236, Pro-242, Pro-245, and Pro-260. Positions 146–164 (PGASGPAGARGNDGATGAA) are enriched in low complexity. Residues 166–178 (PPGPTGPAGPPGF) are compositionally biased toward pro residues. Over residues 212–262 (AGAAGPAGNPGADGQPGAKGANGAPGIAGAPGFPGARGPSGPQGPSGAPGP) the composition is skewed to low complexity. Lys-263 bears the 5-hydroxylysine mark. 4-hydroxyproline is present on residues Pro-269, Pro-272, Pro-284, Pro-293, Pro-308, Pro-314, Pro-323, and Pro-329. Positions 318 to 327 (GERGGPGSRG) are enriched in gly residues. A 5-hydroxylysine modification is found at Lys-338. 4-hydroxyproline is present on residues Pro-347, Pro-356, Pro-362, Pro-368, Pro-377, Pro-380, Pro-389, Pro-398, Pro-404, Pro-416, Pro-425, Pro-434, Pro-437, Pro-455, Pro-472, Pro-478, Pro-484, Pro-490, Pro-496, Pro-502, Pro-514, Pro-523, Pro-534, Pro-546, Pro-549, Pro-555, Pro-561, and Pro-570. A compositionally biased stretch (low complexity) spans 371–425 (KGLTGSPGSPGPDGKTGPPGPAGQDGRPGPAGPPGARGQAGVMGFPGPKGAAGEP). The segment covering 484–493 (PGEAGKPGEQ) has biased composition (low complexity). Residues 536–558 (NDGAKGDAGAPGAPGSQGAPGLQ) show a composition bias toward low complexity. Lys-582 carries the post-translational modification 5-hydroxylysine. 4-hydroxyproline occurs at positions 588 and 603. Positions 615–629 (AGPSGPAGPTGARGA) are enriched in low complexity. Phosphoserine is present on Ser-618. Residues Pro-630, Pro-636, Pro-639, Pro-648, Pro-654, Pro-681, and Pro-690 each carry the 4-hydroxyproline modification. Residues 642–672 (AGFAGPPGADGQPGAKGEPGDAGAKGDAGPS) are compositionally biased toward low complexity. Lys-693 is subject to 5-hydroxylysine. The span at 698-714 (SAGPPGATGFPGAAGRV) shows a compositional bias: low complexity. Residues Pro-702 and Pro-708 each carry the 4-hydroxyproline modification. Pro-716 is modified (3-hydroxyproline). Residues Pro-717, Pro-726, Pro-729, Pro-750, Pro-759, Pro-768, Pro-777, Pro-794, Pro-803, Pro-806, Pro-812, Pro-827, Pro-833, Pro-839, Pro-848, and Pro-854 each carry the 4-hydroxyproline modification. Positions 743–752 (ETGPAGRPGE) are enriched in low complexity. Over residues 762–777 (SGEKGSPGADGPAGAP) the composition is skewed to low complexity. The span at 826-836 (PPGPMGPPGLA) shows a compositional bias: pro residues. The span at 838 to 853 (PPGEAGREGSPGAEGS) shows a compositional bias: low complexity. A 5-hydroxylysine modification is found at Lys-863. A compositionally biased stretch (pro residues) spans 871-886 (PGPPGAPGAPGAPGPV). 3 positions are modified to 4-hydroxyproline: Pro-874, Pro-877, and Pro-880. The segment covering 907–921 (AGPAGARGPAGPQGP) has biased composition (low complexity). Over residues 922–936 (RGDKGETGEQGDRGI) the composition is skewed to basic and acidic residues. A 5-hydroxylysine modification is found at Lys-925. Lys-937 bears the 5-hydroxylysine; alternate mark. An O-linked (Gal...) hydroxylysine; alternate glycan is attached at Lys-937. 4-hydroxyproline occurs at positions 952, 955, 973, and 988. Residues 955–988 (PGEQGPSGASGPAGPRGPPGSAGTPGKDGLNGLP) show a composition bias toward low complexity. Pro-993 carries the 3-hydroxyproline modification. 4-hydroxyproline is present on Pro-994. The span at 1006-1021 (VGPPGPPGPPGPPGPP) shows a compositional bias: pro residues. The residue at position 1008 (Pro-1008) is a 3-hydroxyproline. A 4-hydroxyproline modification is found at Pro-1009. Residue Pro-1011 is modified to 3-hydroxyproline. The residue at position 1012 (Pro-1012) is a 4-hydroxyproline. At Pro-1014 the chain carries 3-hydroxyproline. 4-hydroxyproline occurs at positions 1015, 1018, and 1021.

It belongs to the fibrillar collagen family. As to quaternary structure, trimers of one alpha 2(I) and two alpha 1(I) chains. Post-translationally, contains mostly 4-hydroxyproline. Proline residues at the third position of the tripeptide repeating unit (G-X-Y) are hydroxylated in some or all of the chains. In terms of processing, contains 3-hydroxyproline at a few sites. This modification occurs on the first proline residue in the sequence motif Gly-Pro-Hyp, where Hyp is 4-hydroxyproline. Lysine residues at the third position of the tripeptide repeating unit (G-X-Y) are 5-hydroxylated in some or all of the chains. Post-translationally, O-glycosylated on hydroxylated lysine residues. The O-linked glycan consists of a Glc-Gal disaccharide. Expressed in bones.

The protein resides in the secreted. It is found in the extracellular space. Its subcellular location is the extracellular matrix. Type I collagen is a member of group I collagen (fibrillar forming collagen). The polypeptide is Collagen alpha-1(I) chain (Doedicurus sp. (South American giant glyptodont)).